The primary structure comprises 311 residues: Protein translocase subunit SecF (311 aa).

The next 6 membrane-spanning stretches (helical) occupy residues 23–42 (VSYS…ISIY), 140–160 (IEAG…YIGV), 164–184 (WYFG…ALGF), 194–214 (LSTI…SVVI), 246–266 (ILTV…GGKA), and 272–292 (VLVF…SAPI).

It belongs to the SecD/SecF family. SecF subfamily. In terms of assembly, forms a complex with SecD. Part of the essential Sec protein translocation apparatus which comprises SecA, SecYEG and auxiliary proteins SecDF-YajC and YidC.

The protein localises to the cell inner membrane. Its function is as follows. Part of the Sec protein translocase complex. Interacts with the SecYEG preprotein conducting channel. SecDF uses the proton motive force (PMF) to complete protein translocation after the ATP-dependent function of SecA. In Rickettsia prowazekii (strain Madrid E), this protein is Protein translocase subunit SecF.